Consider the following 638-residue polypeptide: Carbon monoxide dehydrogenase (638 aa).

Residues cysteine 46, cysteine 55, cysteine 58, cysteine 63, and cysteine 74 each coordinate [4Fe-4S] cluster. The [Ni-4Fe-5S] cluster site is built by histidine 265, cysteine 299, cysteine 343, cysteine 452, cysteine 483, and cysteine 524.

This sequence belongs to the Ni-containing carbon monoxide dehydrogenase family. As to quaternary structure, homodimer. The cofactor is [4Fe-4S] cluster. [Ni-4Fe-5S] cluster serves as cofactor.

It catalyses the reaction CO + 2 oxidized [2Fe-2S]-[ferredoxin] + H2O = 2 reduced [2Fe-2S]-[ferredoxin] + CO2 + 2 H(+). In terms of biological role, CODH oxidizes carbon monoxide coupled, via CooF, to the reduction of a hydrogen cation by a hydrogenase (possibly CooH). The chain is Carbon monoxide dehydrogenase (cooS) from Methanopyrus kandleri (strain AV19 / DSM 6324 / JCM 9639 / NBRC 100938).